Reading from the N-terminus, the 432-residue chain is Adenylosuccinate synthetase (432 aa).

GTP is bound by residues 13–19 and 41–43; these read GDEGKGK and GHT. Catalysis depends on aspartate 14, which acts as the Proton acceptor. Residues aspartate 14 and glycine 41 each contribute to the Mg(2+) site. IMP contacts are provided by residues 14-17, 39-42, threonine 130, arginine 144, glutamine 225, threonine 240, and arginine 304; these read DEGK and NAGH. The active-site Proton donor is histidine 42. A substrate-binding site is contributed by 300-306; sequence ATTGRKR. Residues arginine 306, 332–334, and 414–416 contribute to the GTP site; these read KLD and STG.

This sequence belongs to the adenylosuccinate synthetase family. As to quaternary structure, homodimer. The cofactor is Mg(2+).

Its subcellular location is the cytoplasm. It carries out the reaction IMP + L-aspartate + GTP = N(6)-(1,2-dicarboxyethyl)-AMP + GDP + phosphate + 2 H(+). Its pathway is purine metabolism; AMP biosynthesis via de novo pathway; AMP from IMP: step 1/2. In terms of biological role, plays an important role in the de novo pathway of purine nucleotide biosynthesis. Catalyzes the first committed step in the biosynthesis of AMP from IMP. The polypeptide is Adenylosuccinate synthetase (Alkalilimnicola ehrlichii (strain ATCC BAA-1101 / DSM 17681 / MLHE-1)).